We begin with the raw amino-acid sequence, 174 residues long: MGKITFYEDRGFQGRHYECSTDHSNLQPYFSRCNSVRVDSGCWMLYEQPNFTGCQYFLRRGDYPDYQQWMGFSDSVRSCRLIPHAGSHRIRLYEREEYRGQMIEFTEDCPSLQDRFHFNEIYSLNVLEGCWVLYDMTNYRGRQYLLRPGEYRRYHDWGAMNARVGSLRRVMDFY.

2 consecutive Beta/gamma crystallin 'Greek key' domains span residues 2 to 40 (GKIT…RVDS) and 41 to 83 (GCWM…RLIP). The tract at residues 84–87 (HAGS) is connecting peptide. Beta/gamma crystallin 'Greek key' domains are found at residues 88 to 128 (HRIR…NVLE) and 129 to 171 (GCWV…RRVM).

Belongs to the beta/gamma-crystallin family. As to expression, detected in the superior olivary complex of the auditory hindbrain.

Functionally, crystallins are the dominant structural components of the vertebrate eye lens. In Mus musculus (Mouse), this protein is Gamma-crystallin D (Crygd).